The chain runs to 509 residues: ATP synthase subunit alpha 1 (509 aa).

Residue 172–179 coordinates ATP; that stretch reads GDRQTGKT.

This sequence belongs to the ATPase alpha/beta chains family. As to quaternary structure, F-type ATPases have 2 components, CF(1) - the catalytic core - and CF(0) - the membrane proton channel. CF(1) has five subunits: alpha(3), beta(3), gamma(1), delta(1), epsilon(1). CF(0) has four main subunits: a(1), b(1), b'(1) and c(9-12).

It localises to the cell inner membrane. It catalyses the reaction ATP + H2O + 4 H(+)(in) = ADP + phosphate + 5 H(+)(out). Produces ATP from ADP in the presence of a proton gradient across the membrane. The alpha chain is a regulatory subunit. In Dinoroseobacter shibae (strain DSM 16493 / NCIMB 14021 / DFL 12), this protein is ATP synthase subunit alpha 1.